We begin with the raw amino-acid sequence, 727 residues long: Polyphosphate kinase (727 aa).

An ATP-binding site is contributed by N82. Mg(2+) contacts are provided by R412 and R442. H472 functions as the Phosphohistidine intermediate in the catalytic mechanism. Y505, R601, and H629 together coordinate ATP.

This sequence belongs to the polyphosphate kinase 1 (PPK1) family. Requires Mg(2+) as cofactor. In terms of processing, an intermediate of this reaction is the autophosphorylated ppk in which a phosphate is covalently linked to a histidine residue through a N-P bond.

It carries out the reaction [phosphate](n) + ATP = [phosphate](n+1) + ADP. Its function is as follows. Catalyzes the reversible transfer of the terminal phosphate of ATP to form a long-chain polyphosphate (polyP). The chain is Polyphosphate kinase from Pseudomonas putida (strain ATCC 47054 / DSM 6125 / CFBP 8728 / NCIMB 11950 / KT2440).